The following is a 493-amino-acid chain: Voltage-gated potassium channel regulatory subunit KCNF1 (493 aa).

Topologically, residues 1 to 183 are cytoplasmic; it reads MDASAEQSLP…KPESSCPARV (183 aa). Residues 184–204 traverse the membrane as a helical segment; sequence VAVLSFLLILVSSVVMCMGTI. The Extracellular portion of the chain corresponds to 205–223; it reads PELQVVDSEGNRVEHPTLE. Residues 224-244 traverse the membrane as a helical segment; it reads NVETACIGWFTLEYLLRLFSS. Over 245-249 the chain is Cytoplasmic; that stretch reads PNKLH. The helical transmembrane segment at 250 to 270 threads the bilayer; the sequence is FALSFMNIVDVLAILPFYVSL. Residues 271-289 are Extracellular-facing; sequence TLTHLGARMMELTNVQQAV. Residues 290–310 traverse the membrane as a helical; Voltage-sensor segment; that stretch reads QALRIMRIARIFKLARHSSGL. Residues 311–324 lie on the Cytoplasmic side of the membrane; sequence QTLTYALKRSFKEL. A helical membrane pass occupies residues 325 to 345; sequence GLLLMYLAVGIFVFSALGYTM. Residues 346 to 357 lie on the Extracellular side of the membrane; that stretch reads EQSHPETLFKSI. Residues 358-378 constitute an intramembrane region (pore-forming); the sequence is PQSFWWAIITMTTVGYGDIYP. A Selectivity filter motif is present at residues 370–375; it reads TVGYGD. Topologically, residues 379-385 are extracellular; it reads KTTLGKL. The chain crosses the membrane as a helical span at residues 386-406; sequence NAAISFLCGVIAIALPIHPII. Residues 407–493 are Cytoplasmic-facing; it reads NNFVRYYNKQ…HHRTRLQSCK (87 aa). Residues 433 to 468 form a disordered region; that stretch reads NSSSAESKPGGSRSDLDTLPPEPAAREGPSWGSRLK.

Belongs to the potassium channel family. F (TC 1.A.1.2) subfamily. Kv5.1/KCNF1 sub-subfamily. Heterotetramer with KCNB1 or KCNB2. As to expression, expressed in brain namely in the piriform cortex, olfactory tubercle, and medial habenular nucleus. Also expressed in the medial amygdaloid nuclei and the lateral amygdaloid area.

It is found in the cell membrane. In terms of biological role, regulatory alpha-subunit of the voltage-gated potassium (Kv) channel which, when coassembled with KCNB1 or KCNB2, can modulate their expression and their gating kinetics by acting on deactivation upon repolarization and inactivation during maintained depolarization. Accelerates inactivation but has relatively little effect on deactivation. Coexpression with KCNB1 or KCNB2 markedly slows inactivation. Each modulatory subunit has its own specific properties of regulation, and can lead to extensive inhibitions, to large changes in kinetics, and/or to large shifts in the voltage dependencies of the inactivation process. The gating kinetics depends on the nature and stoichiometry of the associated regulatory sunbunit. Fails to produce a potassium current when expressed alone. In Rattus norvegicus (Rat), this protein is Voltage-gated potassium channel regulatory subunit KCNF1.